Here is a 98-residue protein sequence, read N- to C-terminus: MPRPKKCRQLSSCAPCSLFKPNGIPAVELTHIQLEADEFEALELGDVKRLSQIEAAALMGISRQTFGYLLANARKKVATAITQGQALRLPTPKDKDLS.

It belongs to the UPF0251 family.

The protein is UPF0251 protein Sbal_3699 of Shewanella baltica (strain OS155 / ATCC BAA-1091).